The primary structure comprises 419 residues: Probable pectate lyase C (419 aa).

The N-terminal stretch at 1–19 (MRLGIALFSLIGLCHSVSA) is a signal peptide. N-linked (GlcNAc...) asparagine glycans are attached at residues asparagine 48, asparagine 164, and asparagine 201. Arginine 204 is an active-site residue. Residues 261–296 (NEYFHGYVETNYYDPDRDGTLNGNELGVSASNYGGM) form the EF-hand domain. Ca(2+)-binding residues include aspartate 274, aspartate 276, aspartate 278, threonine 280, and glutamate 285. Residues 350–395 (ELISDEASMGGPGDLDGGSPPTDSDGDGIPDDAETEIGSDPNTADS) are disordered. The segment covering 373–386 (SDGDGIPDDAETEI) has biased composition (acidic residues).

The protein belongs to the polysaccharide lyase 1 family. The cofactor is Ca(2+).

It localises to the secreted. It catalyses the reaction Eliminative cleavage of (1-&gt;4)-alpha-D-galacturonan to give oligosaccharides with 4-deoxy-alpha-D-galact-4-enuronosyl groups at their non-reducing ends.. Functionally, pectinolytic enzyme consist of four classes of enzymes: pectin lyase, polygalacturonase, pectin methylesterase and rhamnogalacturonase. Among pectinolytic enzymes, pectin lyase is the most important in depolymerization of pectin, since it cleaves internal glycosidic bonds of highly methylated pectins. Favors pectate, the anion, over pectin, the methyl ester. This is Probable pectate lyase C (plyC) from Aspergillus terreus (strain NIH 2624 / FGSC A1156).